Here is a 2033-residue protein sequence, read N- to C-terminus: Envoplakin (2033 aa).

Positions 1-27 (MFKGLSKGSQGKGSPKGSPAKGSPKGS) are enriched in low complexity. Disordered stretches follow at residues 1 to 37 (MFKGLSKGSQGKGSPKGSPAKGSPKGSPSRHSRAATQ) and 65 to 85 (QQDRLNSEQSQALQHQQETGR). The interval 1–841 (MFKGLSKGSQ…LEPTLAVSAP (841 aa)) is globular 1. Positions 12-28 (KGSPKGSPAKGSPKGSP) are 4 X 4 AA tandem repeats of K-G-S-P. Residues 71–84 (SEQSQALQHQQETG) are compositionally biased toward polar residues. The Spectrin repeat unit spans residues 229-330 (YTHLQGCTRQ…LCICQETQLQ (102 aa)). Positions 388 to 401 (TERATGDLQRRSRD) are enriched in basic and acidic residues. Disordered stretches follow at residues 388-418 (TERATGDLQRRSRDVAPLPQRRNPPQQPLHV) and 891-916 (SEDIRRTHDAKQGSESPAQAGRESEA). An SH3 domain is found at 413–470 (QQPLHVDSICDWDSGEVQLLQGERYKLVDNTDPHAWVVQGPGGETKRAPAACFCIPAP). A central fibrous rod domain region spans residues 842-1673 (KRPRVAPLQE…AKVSREELSQ (832 aa)). Positions 845 to 1135 (RVAPLQESIQ…AISSVEPKVI (291 aa)) form a coiled coil. Residues 891–902 (SEDIRRTHDAKQ) are compositionally biased toward basic and acidic residues. The Plectin 1 repeat unit spans residues 1185–1226 (KQRPKVQLQERVHEIFQVDPETEQEITRLKAKLQEMAGKRSG). The residue at position 1575 (serine 1575) is a Phosphoserine. Over residues 1614–1623 (QEESKLLSQK) the composition is skewed to low complexity. A disordered region spans residues 1614-1636 (QEESKLLSQKTESERQKAAQRGQ). The globular 2 stretch occupies residues 1674 to 2033 (ETQTRETNLS…ASPTVPRSLR (360 aa)). The stretch at 1678–1713 (RETNLSTKISILEPETGKDMSPYEAYKRGIIDRGQY) is one Plectin 2 repeat. Serine 1799 bears the Phosphoserine mark. Plectin repeat units follow at residues 1818–1855 (LGLGDDSFPIAGIYDTTTDNKCSIKTAVAKNMLDPITG), 1856–1893 (QKLLEAQAATGGIVDLLSRERYSVHKAMERGLIENTST), 1894–1931 (QRLLNAQKAFTGIEDPVTKKRLSVGEAVQKGWMPRESV), 1932–1969 (LPHLQVQHLTGGLIDPKRTGRIPIQQALLSGMISEELA), and 1970–2007 (QLLQDESSYEKDLTDPISKERLSYKEAMGRCRKDPLSG). Serine 2025 carries the phosphoserine modification.

The protein belongs to the plakin or cytolinker family. May form a homodimer or a heterodimer with PPL. In terms of tissue distribution, exclusively expressed in stratified squamous epithelia.

The protein resides in the cell junction. Its subcellular location is the desmosome. It localises to the cornified envelope. The protein localises to the cytoplasm. It is found in the cytoskeleton. In terms of biological role, component of the cornified envelope of keratinocytes. May link the cornified envelope to desmosomes and intermediate filaments. This Homo sapiens (Human) protein is Envoplakin (EVPL).